The chain runs to 222 residues: Protein DEHYDRATION-INDUCED 19 homolog 6 (222 aa).

Ser-116 is modified (phosphoserine).

This sequence belongs to the Di19 family. In terms of processing, phosphorylated in vitro by CPK3 or CPK11. As to expression, expressed in seedlings, roots, leaves, stems, flowers and siliques.

It localises to the nucleus. This is Protein DEHYDRATION-INDUCED 19 homolog 6 (DI19-6) from Arabidopsis thaliana (Mouse-ear cress).